We begin with the raw amino-acid sequence, 418 residues long: Lysophosphatidic acid phosphatase type 6 (418 aa).

The transit peptide at 1-25 directs the protein to the mitochondrion; the sequence is MRVWVPVGVLTSLAYCFHQRRVALA. The segment at 51–161 is substrate binding; that stretch reads RHGARSPLKP…VFIRSTNMFR (111 aa). His-52 (nucleophile) is an active-site residue. The Proton donor role is filled by Asp-327.

Belongs to the histidine acid phosphatase family. In terms of assembly, monomer.

It localises to the mitochondrion. It carries out the reaction a phosphate monoester + H2O = an alcohol + phosphate. The catalysed reaction is 1-(9Z-octadecenoyl)-sn-glycero-3-phosphate + H2O = 1-(9Z-octadecenoyl)-sn-glycerol + phosphate. Its function is as follows. Hydrolyzes lysophosphatidic acid (LPA) containing a medium length fatty acid chain to the corresponding monoacylglycerol. Has highest activity with lysophosphatidic acid containing myristate (C14:0), monounsaturated oleate (C18:1) or palmitate (C16:0), and lower activity with C18:0 and C6:0 lysophosphatidic acid. The protein is Lysophosphatidic acid phosphatase type 6 (Acp6) of Mus musculus (Mouse).